A 192-amino-acid chain; its full sequence is dTTP/UTP pyrophosphatase (192 aa).

The active-site Proton acceptor is Asp-75.

This sequence belongs to the Maf family. YhdE subfamily. A divalent metal cation serves as cofactor.

The protein resides in the cytoplasm. The enzyme catalyses dTTP + H2O = dTMP + diphosphate + H(+). It catalyses the reaction UTP + H2O = UMP + diphosphate + H(+). In terms of biological role, nucleoside triphosphate pyrophosphatase that hydrolyzes dTTP and UTP. May have a dual role in cell division arrest and in preventing the incorporation of modified nucleotides into cellular nucleic acids. This Bdellovibrio bacteriovorus (strain ATCC 15356 / DSM 50701 / NCIMB 9529 / HD100) protein is dTTP/UTP pyrophosphatase.